We begin with the raw amino-acid sequence, 288 residues long: Bifunctional protein FolD (288 aa).

NADP(+) contacts are provided by residues Gly166 to Ser168 and Ile232.

The protein belongs to the tetrahydrofolate dehydrogenase/cyclohydrolase family. In terms of assembly, homodimer.

It carries out the reaction (6R)-5,10-methylene-5,6,7,8-tetrahydrofolate + NADP(+) = (6R)-5,10-methenyltetrahydrofolate + NADPH. It catalyses the reaction (6R)-5,10-methenyltetrahydrofolate + H2O = (6R)-10-formyltetrahydrofolate + H(+). It functions in the pathway one-carbon metabolism; tetrahydrofolate interconversion. Catalyzes the oxidation of 5,10-methylenetetrahydrofolate to 5,10-methenyltetrahydrofolate and then the hydrolysis of 5,10-methenyltetrahydrofolate to 10-formyltetrahydrofolate. This Yersinia pseudotuberculosis serotype O:1b (strain IP 31758) protein is Bifunctional protein FolD.